The primary structure comprises 100 residues: Small ribosomal subunit protein uS14c (100 aa).

This sequence belongs to the universal ribosomal protein uS14 family. As to quaternary structure, part of the 30S ribosomal subunit.

The protein localises to the plastid. It localises to the chloroplast. Its function is as follows. Binds 16S rRNA, required for the assembly of 30S particles. The sequence is that of Small ribosomal subunit protein uS14c from Glycine max (Soybean).